Consider the following 199-residue polypeptide: Protein ASYMMETRIC LEAVES 2 (199 aa).

The LOB domain maps to 8 to 109 (SPCAACKFLR…IDLSCAKSEL (102 aa)).

This sequence belongs to the LOB domain-containing protein family. As to quaternary structure, homo- and heterodimer with AS1. Interacts with AS1. Part of the AS1 repressor complex composed of AS1, LBD6/AS2 and HDA6. Interacts with LFR. Expressed in young shoots, roots, stems, leaves, flowers and adaxial domains of cotyledonary and leaves primordia.

It is found in the nucleus. In terms of biological role, negative regulator of cell proliferation in the adaxial side of leaves. Regulates the formation of a symmetric lamina and the establishment of venation. Positively regulates LATERAL ORGAN BOUNDARIES (LOB) within the shoot apex, and the class III HD-ZIP genes REV, PHB, and PHV. Interacts directly with ASYMMETRIC LEAVES 1 (AS1) to repress the knox homeobox genes KNAT1, KNAT2, and KNAT6 and the abaxial determinants ARF3, KAN2 and YAB5. May act in parallel with the RDR6-SGS3-AGO7 pathway, an endogenous RNA silencing pathway, to regulate the leaf morphogenesis. Required for the binding of AS1 to the KNOX genes. Involved in leaf polarity establishment by functioning cooperatively with RH10 or RID2 to repress abaxial genes ARF3, ARF4, KAN1, KAN2, YAB1 and YAB5, and the knox homeobox genes KNAT1, KNAT2, KNAT6, and STM to promote adaxial development in leaf primordia at shoot apical meristems at high temperatures. This Arabidopsis thaliana (Mouse-ear cress) protein is Protein ASYMMETRIC LEAVES 2.